Reading from the N-terminus, the 437-residue chain is Nuclear distribution protein PAC1 (437 aa).

Positions 64 to 94 (LSVIRLQRKVMDLETRLEAAEREASSTHKAN) form a coiled coil. WD repeat units follow at residues 114 to 153 (LHKQPVNAVSFHPFHSTLASACEDGNIRIWDYELGEIETT), 156 to 217 (AHTR…ANVK), 221 to 260 (GHDHTISAVKFTASGNHVISASRDKTVRVWSVQSGYCVRT), 263 to 301 (GHTDWVKSCAALNEEFIFSAGIDHVTRVSEFVSGDGKMT), 304 to 356 (GHEH…LLIL), 358 to 397 (GHDNWVRGVVLHPAGRYLVSVSDDKTMRCWDLEQGGRCIR), and 401 to 437 (AHGHFVTCVAWAPNDVNGRVRCLVATGGVDGQVKVWQ). A disordered region spans residues 165-186 (DFSQPDTGASRDKSHDKPRADV). Residues 173–186 (ASRDKSHDKPRADV) are compositionally biased toward basic and acidic residues.

Belongs to the WD repeat LIS1/nudF family. Self-associates. Interacts with NDL1 and dynein.

The protein resides in the cytoplasm. Its subcellular location is the cytoskeleton. It is found in the spindle pole. Positively regulates the activity of the minus-end directed microtubule motor protein dynein. Plays a central role in positioning the mitotic spindle at the bud neck during cell division. Targets cytoplasmic dynein to microtubule plus ends, thereby promoting dynein-mediated microtubule sliding along the bud cortex and consequently the movement of the mitotic spindle to the bud neck. The chain is Nuclear distribution protein PAC1 from Yarrowia lipolytica (strain CLIB 122 / E 150) (Yeast).